Reading from the N-terminus, the 224-residue chain is Protein LURP-one-related 1 (224 aa).

The tract at residues 1–23 (MQQPYEYRYPQGTGPSAPPPPPK) is disordered.

Belongs to the LOR family.

Might be related to the phospholipid scramblase and tubby-like superfamily of membrane tethered transcription factors. The protein is Protein LURP-one-related 1 of Arabidopsis thaliana (Mouse-ear cress).